We begin with the raw amino-acid sequence, 939 residues long: U3 small nucleolar RNA-associated protein 21 (939 aa).

Ser2 is subject to N-acetylserine. WD repeat units follow at residues 40–71 (ATGTLGSTFYIVTCVGKTFQIYDANTLHLLFV), 81–111 (VALSAHFHYVYAAYENKVGIYKRGIEEHLLE), 119–158 (EHLCIFGDYLCASTDDNSIFIYKKSDPQDKYPSEFYTKLT), 168–201 (VSLQHLATYLNKLTVVTKSNVLLFNVRTGKLVFT), 208–245 (QITTAEPAPVLDIIALGTVTGEVIMFNMRKGKRIRTIK), 252–287 (SSLSFRTDGSSHLSVGTSSGDLIFYDLDRRSRIHVL), 295–347 (YGGV…RSRG), 354–388 (SYIAFADSQSHFMLSASKDRSLWSFSLRKDAQSQE), 415–454 (VALAIENARIGEWENIITAHKDEKFARTWDMRNKRVGRWT), 463–497 (VKSVAMSQCGNFGFIGSSNGSITIYNMQSGILRKK), 505–541 (VTGISLDGMNRKMVSCGLDGIVGFYDFNKSTLLGKLK), 546–581 (ITAMVYHRSSDLFALALDDLSIVVIDAVTQRVVRQL), 583–624 (GHSN…DGII), and 626–664 (DNVATNVKFSPNGDLLATTHVTGNGICIWTNRAQFKTVS). Phosphoserine is present on Ser772.

Interacts with snoRNA U3. Interacts with MPP10. Interacts (via WD repeats) with UTP18. Component of the ribosomal small subunit (SSU) processome composed of at least 40 protein subunits and snoRNA U3.

The protein resides in the nucleus. It is found in the nucleolus. In terms of biological role, involved in nucleolar processing of pre-18S ribosomal RNA and ribosome assembly. The protein is U3 small nucleolar RNA-associated protein 21 (UTP21) of Saccharomyces cerevisiae (strain ATCC 204508 / S288c) (Baker's yeast).